Reading from the N-terminus, the 986-residue chain is P3N-PIPO polyprotein (986 aa).

Residues 141 to 284 (KLTEGQMNHL…QSILNSMIQF (144 aa)) form the Peptidase S30 domain. Catalysis depends on for P1 proteinase activity residues H192, D201, and S235. Positions 334–337 (KITC) match the Involved in interaction with stylet and aphid transmission motif. Positions 592-594 (PTK) match the Involved in virions binding and aphid transmission motif. The Peptidase C6 domain occupies 618-740 (LYIAKQGYCY…ESDIKHYRVG (123 aa)). Catalysis depends on for helper component proteinase activity residues C626 and H699.

The protein belongs to the potyviridae P3N-PIPO polyprotein family. In terms of assembly, interacts (via PIPO domain) with host PCaP1 protein; this interaction may help to anchor the movement complex to the plasma membrane from which the complex could move to the plasmodesmata. In terms of processing, potyviral RNA is expressed as two polyproteins which undergo post-translational proteolytic processing. Genome polyprotein is processed by NIa-pro, P1 and HC-pro proteinases resulting in the production of at least ten individual proteins. P3N-PIPO is cleaved by P1 and HC-pro proteinases resulting in the production of three individual proteins. The P1 proteinase and the HC-pro cleave only their respective C-termini autocatalytically.

Its subcellular location is the host cell junction. It localises to the host plasmodesma. The catalysed reaction is Hydrolyzes a Gly-|-Gly bond at its own C-terminus, commonly in the sequence -Tyr-Xaa-Val-Gly-|-Gly, in the processing of the potyviral polyprotein.. Required for aphid transmission and also has proteolytic activity. Only cleaves a Gly-Gly dipeptide at its own C-terminus. Interacts with virions and aphid stylets. Acts as a suppressor of RNA-mediated gene silencing, also known as post-transcriptional gene silencing (PTGS), a mechanism of plant viral defense that limits the accumulation of viral RNAs. May have RNA-binding activity. Functionally, allows efficient cell to cell propagation, by bypassing the host cell wall barrier. Transports viral genome to neighboring plant cells directly through plasmosdesmata, without any budding. In Potato virus Y (strain N) (PVY), this protein is P3N-PIPO polyprotein.